A 609-amino-acid chain; its full sequence is Frizzled and smoothened-like protein E (609 aa).

A signal peptide spans 1–20 (MEMIRIFLIYLILKIIIING). At 21–259 (ENNEYSKGYG…QWKRVYDMAK (239 aa)) the chain is on the extracellular side. Positions 35-192 (FPGSKCLNYV…GLYKVPCIDP (158 aa)) constitute an FZ domain. 4 cysteine pairs are disulfide-bonded: C40-C118, C53-C111, C100-C149, and C138-C189. Residues N75, N130, N172, N198, N217, and N245 are each glycosylated (N-linked (GlcNAc...) asparagine). Residues 260-280 (TLSSISFICACYNILTFGILN) form a helical membrane-spanning segment. Topologically, residues 281-288 (RKRKSKYN) are cytoplasmic. Residues 289 to 309 (ICITLMSTSIALVYLTDIIKF) traverse the membrane as a helical segment. Residues 310–337 (GYGIEEFLCPEPGRSAVQNDAACGITGA) are Extracellular-facing. A helical transmembrane segment spans residues 338 to 358 (MFHFGITYCCCWAMTMSIVLF). The Cytoplasmic portion of the chain corresponds to 359 to 365 (CSVKRIK). A helical transmembrane segment spans residues 366 to 386 (LFYFRHFMIGNTIFTIITTVI). Residues 387-408 (LLSAKKMVAGTGYIECWVRERW) lie on the Extracellular side of the membrane. Residues 409–429 (FVITLFWLPCGIGLSIGIFCI) form a helical membrane-spanning segment. Residues 430 to 457 (GGVIHEIYNISKKVNIRESEFILRQIKP) lie on the Cytoplasmic side of the membrane. Residues 458–478 (FSLVFSVAGSFLYLFIFFFDV) traverse the membrane as a helical segment. Residues 479-511 (ERKIDSYKAAVADYVLCLLSGGSEETCFTTGPN) are Extracellular-facing. A helical membrane pass occupies residues 512–532 (YASFFIFYFFIRVFGVLFFSI). At 533–609 (YGTSRVARDI…DSKSIELEKK (77 aa)) the chain is on the cytoplasmic side. Positions 559-570 (ESGISRNNSRTD) are enriched in polar residues. The tract at residues 559-609 (ESGISRNNSRTDISFGKNNNSKNSNNSKNSNNSKNSNNSDNDSKSIELEKK) is disordered. Residues 575–598 (KNNNSKNSNNSKNSNNSKNSNNSD) are compositionally biased toward low complexity. The span at 599–609 (NDSKSIELEKK) shows a compositional bias: basic and acidic residues.

Belongs to the G-protein coupled receptor Fz/Smo family.

The protein localises to the membrane. The sequence is that of Frizzled and smoothened-like protein E (fslE) from Dictyostelium discoideum (Social amoeba).